The sequence spans 312 residues: Aspartoacylase (312 aa).

Residues His20 and Glu23 each coordinate Zn(2+). N-acetyl-L-aspartate-binding residues include Arg62, Asn69, and Arg70. His115 serves as a coordination point for Zn(2+). 2 residues coordinate N-acetyl-L-aspartate: Tyr163 and Arg167. Residue Glu177 is the Proton donor/acceptor of the active site. Tyr287 contributes to the N-acetyl-L-aspartate binding site.

This sequence belongs to the AspA/AstE family. Aspartoacylase subfamily. In terms of assembly, homodimer. It depends on Zn(2+) as a cofactor. Detected in kidney proximal tubule cells (at protein level).

The protein localises to the cytoplasm. The protein resides in the nucleus. It carries out the reaction an N-acyl-L-aspartate + H2O = a carboxylate + L-aspartate. It catalyses the reaction N-acetyl-L-aspartate + H2O = L-aspartate + acetate. Its function is as follows. Catalyzes the deacetylation of N-acetylaspartic acid (NAA) to produce acetate and L-aspartate. NAA occurs in high concentration in brain and its hydrolysis NAA plays a significant part in the maintenance of intact white matter. In other tissues it acts as a scavenger of NAA from body fluids. The sequence is that of Aspartoacylase from Rattus norvegicus (Rat).